An 85-amino-acid polypeptide reads, in one-letter code: Beta-insect depressant toxin BjIT2 (85 aa).

A signal peptide spans 1-21; the sequence is MKLLLLLVISASMLLECLVNA. The LCN-type CS-alpha/beta domain occupies 22 to 82; it reads DGYIRKKDGC…TWKSSTNTCG (61 aa). 4 disulfide bridges follow: cysteine 31–cysteine 81, cysteine 35–cysteine 56, cysteine 42–cysteine 63, and cysteine 46–cysteine 65. A propeptide spans 83–85 (removed by a carboxypeptidase); sequence RKK.

Belongs to the long (4 C-C) scorpion toxin superfamily. Sodium channel inhibitor family. Beta subfamily. C-terminal basic residues are removed by a carboxypeptidase. Expressed by the venom gland.

The protein localises to the secreted. Depressant insect beta-toxins cause a transient contraction paralysis followed by a slow flaccid paralysis. They bind voltage-independently at site-4 of sodium channels (Nav) and shift the voltage of activation toward more negative potentials thereby affecting sodium channel activation and promoting spontaneous and repetitive firing. This toxin is active only on insects. This chain is Beta-insect depressant toxin BjIT2, found in Hottentotta judaicus (Black scorpion).